Here is a 352-residue protein sequence, read N- to C-terminus: S-adenosylmethionine:tRNA ribosyltransferase-isomerase (352 aa).

Belongs to the QueA family. Monomer.

Its subcellular location is the cytoplasm. It catalyses the reaction 7-aminomethyl-7-carbaguanosine(34) in tRNA + S-adenosyl-L-methionine = epoxyqueuosine(34) in tRNA + adenine + L-methionine + 2 H(+). Its pathway is tRNA modification; tRNA-queuosine biosynthesis. Functionally, transfers and isomerizes the ribose moiety from AdoMet to the 7-aminomethyl group of 7-deazaguanine (preQ1-tRNA) to give epoxyqueuosine (oQ-tRNA). The sequence is that of S-adenosylmethionine:tRNA ribosyltransferase-isomerase from Vibrio cholerae serotype O1 (strain ATCC 39541 / Classical Ogawa 395 / O395).